The sequence spans 649 residues: Putative cystathionine gamma-synthase YML082W (649 aa).

Residues 242-273 (NEANHGEDHDGGISGEVDSQEEPHNGLVSTIP) form a disordered region. At Ser-287 the chain carries Phosphoserine. Position 451 is an N6-(pyridoxal phosphate)lysine (Lys-451).

Belongs to the trans-sulfuration enzymes family. MET7 subfamily. Pyridoxal 5'-phosphate is required as a cofactor.

The enzyme catalyses O-succinyl-L-homoserine + L-cysteine = L,L-cystathionine + succinate + H(+). The protein operates within amino-acid biosynthesis; L-methionine biosynthesis via de novo pathway; L-cystathionine from O-succinyl-L-homoserine: step 1/1. Functionally, catalyzes the formation of L-cystathionine from O-succinyl-L-homoserine (OSHS) and L-cysteine, via a gamma-replacement reaction. In the absence of thiol, catalyzes gamma-elimination to form 2-oxobutanoate, succinate and ammonia. The sequence is that of Putative cystathionine gamma-synthase YML082W from Saccharomyces cerevisiae (strain ATCC 204508 / S288c) (Baker's yeast).